Here is a 332-residue protein sequence, read N- to C-terminus: 4-hydroxy-3-methylbut-2-enyl diphosphate reductase (332 aa).

Cys-34 provides a ligand contact to [4Fe-4S] cluster. (2E)-4-hydroxy-3-methylbut-2-enyl diphosphate contacts are provided by His-63 and His-96. Dimethylallyl diphosphate contacts are provided by His-63 and His-96. Positions 63 and 96 each coordinate isopentenyl diphosphate. Cys-118 contacts [4Fe-4S] cluster. His-146 serves as a coordination point for (2E)-4-hydroxy-3-methylbut-2-enyl diphosphate. His-146 contacts dimethylallyl diphosphate. Residue His-146 coordinates isopentenyl diphosphate. The Proton donor role is filled by Glu-148. Thr-186 is a binding site for (2E)-4-hydroxy-3-methylbut-2-enyl diphosphate. Cys-216 is a [4Fe-4S] cluster binding site. Residues Ser-244, Ser-245, Asn-246, and Ser-289 each coordinate (2E)-4-hydroxy-3-methylbut-2-enyl diphosphate. Residues Ser-244, Ser-245, Asn-246, and Ser-289 each contribute to the dimethylallyl diphosphate site. Positions 244, 245, 246, and 289 each coordinate isopentenyl diphosphate.

The protein belongs to the IspH family. It depends on [4Fe-4S] cluster as a cofactor.

It catalyses the reaction isopentenyl diphosphate + 2 oxidized [2Fe-2S]-[ferredoxin] + H2O = (2E)-4-hydroxy-3-methylbut-2-enyl diphosphate + 2 reduced [2Fe-2S]-[ferredoxin] + 2 H(+). The catalysed reaction is dimethylallyl diphosphate + 2 oxidized [2Fe-2S]-[ferredoxin] + H2O = (2E)-4-hydroxy-3-methylbut-2-enyl diphosphate + 2 reduced [2Fe-2S]-[ferredoxin] + 2 H(+). The protein operates within isoprenoid biosynthesis; dimethylallyl diphosphate biosynthesis; dimethylallyl diphosphate from (2E)-4-hydroxy-3-methylbutenyl diphosphate: step 1/1. Its pathway is isoprenoid biosynthesis; isopentenyl diphosphate biosynthesis via DXP pathway; isopentenyl diphosphate from 1-deoxy-D-xylulose 5-phosphate: step 6/6. Its function is as follows. Catalyzes the conversion of 1-hydroxy-2-methyl-2-(E)-butenyl 4-diphosphate (HMBPP) into a mixture of isopentenyl diphosphate (IPP) and dimethylallyl diphosphate (DMAPP). Acts in the terminal step of the DOXP/MEP pathway for isoprenoid precursor biosynthesis. In Mycobacterium leprae (strain TN), this protein is 4-hydroxy-3-methylbut-2-enyl diphosphate reductase.